We begin with the raw amino-acid sequence, 2197 residues long: Protein sickie (2197 aa).

The region spanning 21 to 129 (RDYAEIYTDW…LFFALSRFKQ (109 aa)) is the Calponin-homology (CH) domain. Disordered regions lie at residues 165–197 (GLRTPGSSLNQDKNQQEQQQQQQQQQTPQQLAQ), 235–311 (CPPD…PQKH), 331–646 (AASV…NKFH), 730–767 (GSSPGGSRFHDIDNGYLSEGSSGLNGPSSSAGGISPGK), 788–910 (RNSR…FGYV), 1094–1119 (GPGQMAGQMSGNESPYVQSPRMNRSN), and 1202–1223 (TAAGASVLSPTHGTTSAAGLVG). Over residues 175–197 (QDKNQQEQQQQQQQQQTPQQLAQ) the composition is skewed to low complexity. The span at 261-290 (SDFNTSRPNSPPTSNHTIQSLKSGNNNSLR) shows a compositional bias: polar residues. The span at 291–304 (PPSIKSGIPSPSSP) shows a compositional bias: low complexity. Residues 331–341 (AASVASKTQIQ) are compositionally biased toward polar residues. 2 stretches are compositionally biased toward low complexity: residues 342-354 (SKRTSSSSGFSSA) and 379-398 (SVSSQKPQPKTKQSKLLAAQ). A compositionally biased stretch (basic and acidic residues) spans 399 to 428 (QKKEQANKATKLDKKEKSPARSLNKEESGN). Polar residues-rich tracts occupy residues 429 to 441 (ESRSSTMGRTGKS), 561 to 570 (ANSQPTSHIS), 577 to 588 (EPSTPQHSSGIY), and 633 to 644 (SAPNTPTASPNK). Composition is skewed to low complexity over residues 755-766 (GPSSSAGGISPG), 796-831 (SIGTAANGSSAASQASSSGGSTTTHAQNNNNNNNNN), and 887-904 (SSSKQGSPSSSSRTKGVP). Over residues 1100-1119 (GQMSGNESPYVQSPRMNRSN) the composition is skewed to polar residues. Residues 1262 to 1342 (YGNAEERQAH…RQTIELLRKQ (81 aa)) are a coiled coil. Disordered regions lie at residues 1373 to 1415 (QALG…SMCS) and 1455 to 1511 (KTSR…SPAK). 2 stretches are compositionally biased toward polar residues: residues 1379–1399 (GSDQKPPNSGSQRAINANNGS) and 1406–1415 (RQHSTDSMCS). Positions 1455–1468 (KTSRHVGHHHHHNH) are enriched in basic residues. A coiled-coil region spans residues 1556 to 1591 (SSASQLESLKEMMNKMRAEMMSLKHNNERLQKLVTT). Disordered regions lie at residues 1600–1633 (SLGQAISPNGSVAGSSEVSRRYSLADSNSRPPME), 1648–1690 (CLPP…EAAP), and 2172–2197 (SEAQDQESDCASLDSNVTPESSAGAE). Over residues 1603–1616 (QAISPNGSVAGSSE) the composition is skewed to polar residues. Residues 1650 to 1663 (PPAPAPEQPPPPAP) are compositionally biased toward pro residues. Over residues 2184-2197 (LDSNVTPESSAGAE) the composition is skewed to polar residues.

It belongs to the Nav/unc-53 family.

Required for the immune deficiency pathway, which mediates responses to Gram-negative bacterial infection. Favors Rel activation and nuclear translocation. The chain is Protein sickie (sick) from Drosophila melanogaster (Fruit fly).